The chain runs to 206 residues: ATP-dependent Clp protease proteolytic subunit (206 aa).

The active-site Nucleophile is S107. The active site involves H132.

This sequence belongs to the peptidase S14 family. As to quaternary structure, fourteen ClpP subunits assemble into 2 heptameric rings which stack back to back to give a disk-like structure with a central cavity, resembling the structure of eukaryotic proteasomes.

It is found in the cytoplasm. It carries out the reaction Hydrolysis of proteins to small peptides in the presence of ATP and magnesium. alpha-casein is the usual test substrate. In the absence of ATP, only oligopeptides shorter than five residues are hydrolyzed (such as succinyl-Leu-Tyr-|-NHMec, and Leu-Tyr-Leu-|-Tyr-Trp, in which cleavage of the -Tyr-|-Leu- and -Tyr-|-Trp bonds also occurs).. In terms of biological role, cleaves peptides in various proteins in a process that requires ATP hydrolysis. Has a chymotrypsin-like activity. Plays a major role in the degradation of misfolded proteins. The sequence is that of ATP-dependent Clp protease proteolytic subunit from Idiomarina loihiensis (strain ATCC BAA-735 / DSM 15497 / L2-TR).